Here is a 330-residue protein sequence, read N- to C-terminus: Type II methyltransferase M.MthTI (330 aa).

Residues 3-328 (MDIASFFSGA…KKIKKDLEGV (326 aa)) enclose the SAM-dependent MTase C5-type domain. Cys73 is an active-site residue.

The protein belongs to the class I-like SAM-binding methyltransferase superfamily. C5-methyltransferase family.

The catalysed reaction is a 2'-deoxycytidine in DNA + S-adenosyl-L-methionine = a 5-methyl-2'-deoxycytidine in DNA + S-adenosyl-L-homocysteine + H(+). In terms of biological role, a methylase that recognizes the double-stranded sequence 5'-GGCC-3', methylates C-3 on both strands, and protects the DNA from cleavage by the MthTI endonuclease. This Methanothermobacter thermautotrophicus (Methanobacterium thermoformicicum) protein is Type II methyltransferase M.MthTI (mthTIM).